Consider the following 127-residue polypeptide: C-C motif chemokine 28 (127 aa).

A signal peptide spans 1-19 (MQQRGLAIVALAVCAALHA). 2 cysteine pairs are disulfide-bonded: C30–C58 and C31–C73. A glycan (N-linked (GlcNAc...) asparagine) is linked at N78. The span at 92 to 115 (KNGKGNVCHRKKHHGKRNSNRAHQ) shows a compositional bias: basic residues. Residues 92 to 127 (KNGKGNVCHRKKHHGKRNSNRAHQGKHETYGHKTPY) are disordered. Positions 116 to 127 (GKHETYGHKTPY) are enriched in basic and acidic residues.

Belongs to the intercrine beta (chemokine CC) family. Preferentially expressed by epithelial cells of diverse tissues including normal and pathological colon, salivary gland, mammary gland, trachea and rectum. Also found in prostate, spleen, thyroid, psoriasis skin and in lower levels in peripheral blood leukocytes, small intestine, Peyer patches, stomach and normal skin.

The protein resides in the secreted. Its function is as follows. Chemotactic activity for resting CD4, CD8 T-cells and eosinophils. Binds to CCR3 and CCR10 and induces calcium mobilization in a dose-dependent manner. The chain is C-C motif chemokine 28 (CCL28) from Homo sapiens (Human).